A 41-amino-acid polypeptide reads, in one-letter code: Photosystem II reaction center protein L (41 aa).

Residues 20–40 (SLYLGLLLVFVVGLLFSSYFL) traverse the membrane as a helical segment.

Belongs to the PsbL family. PSII is composed of 1 copy each of membrane proteins PsbA, PsbB, PsbC, PsbD, PsbE, PsbF, PsbH, PsbI, PsbJ, PsbK, PsbL, PsbM, PsbT, PsbX, PsbY, PsbZ, Psb30/Ycf12, peripheral proteins PsbO, CyanoQ (PsbQ), PsbU, PsbV and a large number of cofactors. It forms dimeric complexes.

The protein localises to the cellular thylakoid membrane. Its function is as follows. One of the components of the core complex of photosystem II (PSII). PSII is a light-driven water:plastoquinone oxidoreductase that uses light energy to abstract electrons from H(2)O, generating O(2) and a proton gradient subsequently used for ATP formation. It consists of a core antenna complex that captures photons, and an electron transfer chain that converts photonic excitation into a charge separation. This subunit is found at the monomer-monomer interface and is required for correct PSII assembly and/or dimerization. This Synechococcus sp. (strain JA-3-3Ab) (Cyanobacteria bacterium Yellowstone A-Prime) protein is Photosystem II reaction center protein L.